The chain runs to 311 residues: Phosphoglycerate mutase 2 (311 aa).

Residues 16 to 23, 29 to 30, Arg73, 126 to 129, Lys137, 153 to 154, and 243 to 244 each bind substrate; these read RHGQSELN, CG, ERHY, RR, and GS. The Tele-phosphohistidine intermediate role is filled by His17. Glu126 serves as the catalytic Proton donor/acceptor.

Belongs to the phosphoglycerate mutase family. BPG-dependent PGAM subfamily.

Its subcellular location is the cytoplasm. It catalyses the reaction (2R)-2-phosphoglycerate = (2R)-3-phosphoglycerate. It participates in carbohydrate degradation; glycolysis; pyruvate from D-glyceraldehyde 3-phosphate: step 3/5. Could be non-functional. This is Phosphoglycerate mutase 2 (GPM2) from Saccharomyces cerevisiae (strain ATCC 204508 / S288c) (Baker's yeast).